We begin with the raw amino-acid sequence, 2547 residues long: MKATAASGTPTPIAVVGMGCRFAGGATDPQALWKLLEQGGSTWSKTPSSRFNVSGVYHPNGQRVGSMHVRGGHFLDQDPALFDASFFNMTSEVASCMDPQQRLILEVVYEALEAAGIPLESVAGSNTAVFSGAMYHDYQDSLHRNPETLPRYFITGNAGTMMSSRVSHFYDLRGPSVTVDTACSTTLTALHLAIQSIRAGEADMAIVAGSNLLLNSDVFVTMSNLGFLSPDGISYSFDPRANGYGRGEGVAAIILKALPRALRDGDPIRLVVRETALNQDGRTPAITGPSPEAQACLIRECYQKAGLDPRQTSYVEAHGTGTPTGDPLELAAISAAFQGQPLQIGSVKANLGHTEAASGLASVMKVALALEKGIVPPSARFLQPSKKLLEERKFQIPLSSQLWLPIDGICRASINNFGFGGANAHAIVERYDPAARISTSKPNGHIRPHDSHVEADRGKIYVLSAKDEHSCQEMISRLRDYLNRANPTDERQFLANMAYTLASRRSNLRWKAACRAHSLASLLSVLVSDGTRPRRSAEKARLGWVFTGQGAQWFAMGRELIEAYPVFKEALIECDGYIKGMGANWSIIDELRRGEAESRVNEAEFSLPLSTAIQVALVRLLWSWGIRPAAITSHSSGEVAAAYAVGAFSARSAIGISYIRGALIAKTQPAPTTKGGMLAVGLSRSEVGEYITRVQQQGEEYLVVGCINSPSNVTVSGDLSAVVRLEELLHADQIFARRLKVTQAFHSHHMQPLSGEFREALVEVFNADITDTTNACQDVVYASPKTGKRLDDCNHLRDPMHWVESMLFPVEFESSFREMCFDRKDQAQEVDKIIEIGPHGVLSGAIKQILQLPELAAFDISYLSCLSRGKSAVDTIQLLAMDLLQGGYPVDLNAVNFPYGCEAAEVQVLSDLPTYPWNHKTRYWKEPRISRAARQRKIPVHDLIGVQEPLCPPLLHLWQNVLRISDVPWIRDHVVGSRILFPGAGFISMVIDGLSQICNHDPETCGLSYILRDVDLAQALILPTDGDEGVDLRLTIRAADQKSLGMRDWQRFSVYSIAGDKDDWTEHCTGLIRAQVDHPVSSSSIQQKTNPPQWSRKMAPQDLWASLHATGICHGPLFQNIERIESDGQASWCTLTVADTVATMPHAYESQHIVHPTTLDSAIQAAYTVLPFMGTLMKTAMVPSRIGGMKIPASFASLEPGDMLCAQAKIKNQGLSAFTTDVAVFNESDMDEEAGIELEGLTFQSLGAVISDSRRDLTENESTYSSWHWAPDITLTNSTWLERILSTGTQSQEIGVMLELRRCTVHFIQEAIENLTTEDVERLSGHLVKFYCWMQAQLACATNGELGQDSADWLRDSEQERQSLRSRVVAATNNGEMICRLGPKLSAILRGELDPLELMMDGQLLSRYYIRAIKWSRSNTQASELVRLCCHKNPRARILEIGGGTGGCTQLIVNALGPTKPVGRYDFTDVSAGFFEAARKRFSGWQDVMDFRKLDIEGDPEVQGFDCGSYDVVLACQVLHATSNMQRTLNNVRKLLKPGGKLILVETTRDQLDLFFTFGLLPGWWLSEEPERQLTPSLSPELWRSVLSATGFSGVDLEVRDCDSDEFYMISTMMSTATPGTPATTLNGPAEVLLVHAGSPPPMDWLQNLQVALGGKNSSITSLKALQGVSDLKGKMCVFLGEMDRTLLESVVSDDFTSLTSMLQYSQGTLWVTRGAAMASDDPRKALHLGLLRTLRNENHGRRFVSLDLDPLRDPWTAQSCDAIVNVLNAVGASHEKEFEYAERDGTIHVPRTFSDSSSSEKEDLVVLEPFQNETRLVRLDVQTPGLLDSLHFKLCSADEAWSSELPEDWVEIEPRAFGLNFRDIMVAMGQLESNRVMGFECAGVVTRLSKAATTGAGGLAIGDRVCALMKGHWASRVRTARTNVICIPGTLSFEQAASIPLAFTTAYTSLYTVARLQRGEKVLIHGGAGGVGQAAIILAQLVGAEVFTTAGTHSKRNFLIDKFKLAPDHVFSSRDSGFIEGIRACTNGKGVDVVLNSLAGPLLQYSFDCLVNFGRFVEIGKKDLEQNSRLNMATFARNVSFSSIDILYWEEAKSAEIFRALTEIMRLLEQKTIDLIGPISEYPMSAIEKAFRTMQSGQHVGKLVVATAETDMIPVRRGTMPVALKLDASYLIVGGLGGIGRRICEWMVDHGARHLLILSRSGRTDPFVTGLQKRGCVVRIHSCDVADESQLHAVLQQCHEDNMPPIRGIIQAAMVLKDALVSQMTADDFHVALRPKVQGSWNLHKIASEVDFFIMLSSLVGVMGGAGQANYAAAGAFQDALAQHRVAQGKPAVTIDLGMVKSIGYVAETDPAVAERLARIGYQPMHEEEVLAVLERAMSPSSSSAPPSSNPTIPASPAVIVTGINTGPGPHFTNADWMQEARFAGIKYRDPLKDDRGGALSSSQPADEDSVRARLSRASTEEEATALVVQVMGHRLVTMFGLTESEMSATQTLSSVGVDSLVAIELRNWITAQLNVDISVFELMEGRTIAEVAEVVVKKYGVGSKV.

Residues 10–430 (PTPIAVVGMG…GANAHAIVER (421 aa)) form the Ketosynthase family 3 (KS3) domain. Active-site for beta-ketoacyl synthase activity residues include C183, H318, and H353. The segment at 545-890 (VFTGQGAQWF…MDLLQGGYPV (346 aa)) is acyl and malonyl transferase. S635 (for malonyltransferase activity) is an active-site residue. Residues 941-1079 (HDLIGVQEPL…GLIRAQVDHP (139 aa)) form an N-terminal hotdog fold region. Residues 941-1252 (HDLIGVQEPL…FQSLGAVISD (312 aa)) form the PKS/mFAS DH domain. H973 (proton acceptor; for dehydratase activity) is an active-site residue. The dehydratase-like stretch occupies residues 973-985 (HVVGSRILFPGAG). The tract at residues 1095-1252 (SRKMAPQDLW…FQSLGAVISD (158 aa)) is C-terminal hotdog fold. The active-site Proton donor; for dehydratase activity is D1160. Residues C1340 and C1379 are joined by a disulfide bond. Positions 1510–1547 (YDVVLACQVLHATSNMQRTLNNVRKLLKPGGKLILVET) are methyltransferase. One can recognise a Carrier domain in the interval 2459–2541 (ASTEEEATAL…EVAEVVVKKY (83 aa)). O-(pantetheine 4'-phosphoryl)serine is present on S2501.

The cofactor is pantetheine 4'-phosphate.

The enzyme catalyses holo-[2-methylbutanoate polyketide synthase] + 2 malonyl-CoA + S-adenosyl-L-methionine + 2 NADPH + 3 H(+) = (S)-2-methylbutanoyl-[2-methylbutanoate polyketide synthase] + S-adenosyl-L-homocysteine + 2 CO2 + 2 NADP(+) + 2 CoA + H2O. It participates in polyketide biosynthesis; lovastatin biosynthesis. Diketide synthase; part of the gene cluster that mediates the biosynthesis of monakolin K, also known as lovastatin, and which acts as a potent competitive inhibitor of HMG-CoA reductase. Monakolin K biosynthesis is performed in two stages. The first stage is catalyzed by the nonaketide synthase mokA, which belongs to type I polyketide synthases and catalyzes the iterative nine-step formation of the polyketide. This PKS stage completed by the action of dehydrogenase mokE, which catalyzes the NADPH-dependent reduction of the unsaturated tetra-, penta- and heptaketide intermediates that arise during the mokA-mediated biosynthesis of the nonaketide chain and leads to dihydromonacolin L. Covalently bound dihydromonacolin L is released from mokA by the mokD esterase. Conversion of dihydromonacolin L into monacolin L and then monacolin J is subsequently performed with the participation of molecular oxygen and P450 monoogygenase mokC. Finally, mokF performs the conversion of monacoline J to monacoline K through the addition of the side-chain diketide moiety (2R)-2-methylbutanoate produced by the diketide synthase mokB. The protein is Lovastatin diketide synthase mokB of Monascus pilosus (Red mold).